The following is a 76-amino-acid chain: ATP synthase peripheral stalk subunit F6, mitochondrial (76 aa).

3 positions are modified to N6-acetyllysine: Lys-9, Lys-14, and Lys-47. N6-acetyllysine; alternate occurs at positions 52 and 67. N6-succinyllysine; alternate is present on residues Lys-52 and Lys-67. At Lys-73 the chain carries N6-acetyllysine. Ser-76 is subject to Phosphoserine.

This sequence belongs to the eukaryotic ATPase subunit F6 family. Component of the ATP synthase complex composed at least of ATP5F1A/subunit alpha, ATP5F1B/subunit beta, ATP5MC1/subunit c (homooctomer), MT-ATP6/subunit a, MT-ATP8/subunit 8, ATP5ME/subunit e, ATP5MF/subunit f, ATP5MG/subunit g, ATP5MK/subunit k, ATP5MJ/subunit j, ATP5F1C/subunit gamma, ATP5F1D/subunit delta, ATP5F1E/subunit epsilon, ATP5PF/subunit F6, ATP5PB/subunit b, ATP5PD/subunit d, ATP5PO/subunit OSCP. ATP synthase complex consists of a soluble F(1) head domain (subunits alpha(3) and beta(3)) - the catalytic core - and a membrane F(0) domain - the membrane proton channel (subunits c, a, 8, e, f, g, k and j). These two domains are linked by a central stalk (subunits gamma, delta, and epsilon) rotating inside the F1 region and a stationary peripheral stalk (subunits F6, b, d, and OSCP).

The protein localises to the mitochondrion. It is found in the mitochondrion inner membrane. Its function is as follows. Subunit F6, of the mitochondrial membrane ATP synthase complex (F(1)F(0) ATP synthase or Complex V) that produces ATP from ADP in the presence of a proton gradient across the membrane which is generated by electron transport complexes of the respiratory chain. ATP synthase complex consist of a soluble F(1) head domain - the catalytic core - and a membrane F(1) domain - the membrane proton channel. These two domains are linked by a central stalk rotating inside the F(1) region and a stationary peripheral stalk. During catalysis, ATP synthesis in the catalytic domain of F(1) is coupled via a rotary mechanism of the central stalk subunits to proton translocation. In vivo, can only synthesize ATP although its ATP hydrolase activity can be activated artificially in vitro. Part of the complex F(0) domain. Part of the complex F(0) domain and the peripheric stalk, which acts as a stator to hold the catalytic alpha(3)beta(3) subcomplex and subunit a/ATP6 static relative to the rotary elements. This chain is ATP synthase peripheral stalk subunit F6, mitochondrial, found in Sus scrofa (Pig).